The primary structure comprises 567 residues: Urease subunit alpha (567 aa).

Residues 129–567 (GGVDTHIHFI…LPMAQRYFLF (439 aa)) enclose the Urease domain. The Ni(2+) site is built by His-134, His-136, and Lys-217. Lys-217 is subject to N6-carboxylysine. A substrate-binding site is contributed by His-219. His-246 and His-272 together coordinate Ni(2+). His-320 (proton donor) is an active-site residue. Asp-360 is a Ni(2+) binding site.

It belongs to the metallo-dependent hydrolases superfamily. Urease alpha subunit family. In terms of assembly, heterotrimer of UreA (gamma), UreB (beta) and UreC (alpha) subunits. Three heterotrimers associate to form the active enzyme. The cofactor is Ni cation. Post-translationally, carboxylation allows a single lysine to coordinate two nickel ions.

The protein localises to the cytoplasm. The enzyme catalyses urea + 2 H2O + H(+) = hydrogencarbonate + 2 NH4(+). Its pathway is nitrogen metabolism; urea degradation; CO(2) and NH(3) from urea (urease route): step 1/1. The sequence is that of Urease subunit alpha from Aliivibrio fischeri (strain MJ11) (Vibrio fischeri).